Consider the following 262-residue polypeptide: ATP synthase subunit a (262 aa).

A run of 5 helical transmembrane segments spans residues 24–44 (AVHL…LFVF), 84–104 (VIAP…AIDL), 129–149 (DISA…FYTV), 194–214 (LFGN…MYMA), and 228–248 (LVWA…FMML).

It belongs to the ATPase A chain family. As to quaternary structure, F-type ATPases have 2 components, CF(1) - the catalytic core - and CF(0) - the membrane proton channel. CF(1) has five subunits: alpha(3), beta(3), gamma(1), delta(1), epsilon(1). CF(0) has three main subunits: a(1), b(2) and c(9-12). The alpha and beta chains form an alternating ring which encloses part of the gamma chain. CF(1) is attached to CF(0) by a central stalk formed by the gamma and epsilon chains, while a peripheral stalk is formed by the delta and b chains.

The protein localises to the cell inner membrane. In terms of biological role, key component of the proton channel; it plays a direct role in the translocation of protons across the membrane. In Actinobacillus pleuropneumoniae serotype 3 (strain JL03), this protein is ATP synthase subunit a.